Consider the following 456-residue polypeptide: UDP-glycosyltransferase 84B1 (456 aa).

Residues S278, 332–334 (SPQ), 349–357 (HCGWNSTME), and 371–374 (WTDQ) each bind UDP-alpha-D-glucose.

It belongs to the UDP-glycosyltransferase family.

Its function is as follows. Possesses low quercetin 7-O-glucosyltransferase activity in vitro. This is UDP-glycosyltransferase 84B1 (UGT84B1) from Arabidopsis thaliana (Mouse-ear cress).